The sequence spans 152 residues: Large ribosomal subunit protein bL9 (152 aa).

A disordered region spans residues Gln41–Glu61. The span at Ala49–Glu61 shows a compositional bias: basic and acidic residues.

The protein belongs to the bacterial ribosomal protein bL9 family.

Its function is as follows. Binds to the 23S rRNA. The sequence is that of Large ribosomal subunit protein bL9 from Levilactobacillus brevis (strain ATCC 367 / BCRC 12310 / CIP 105137 / JCM 1170 / LMG 11437 / NCIMB 947 / NCTC 947) (Lactobacillus brevis).